A 1003-amino-acid chain; its full sequence is Glutamate receptor ionotropic, NMDA 3B (1003 aa).

Residues 1–24 (MECVQTLWLSLALALARGSWVVRG) form the signal peptide. At 25-574 (HPQPCGVPTR…PIGAFMWPLH (550 aa)) the chain is on the extracellular side. Residues asparagine 69, asparagine 212, asparagine 344, asparagine 451, and asparagine 465 are each glycosylated (N-linked (GlcNAc...) asparagine). Intrachain disulfides connect cysteine 439–cysteine 475 and cysteine 445–cysteine 476. Residues serine 531, serine 533, and arginine 538 each contribute to the glycine site. The D-serine site is built by serine 533 and arginine 538. Residues 575–594 (WSMWVGVFAALHLTALFLTL) form a helical membrane-spanning segment. The Cytoplasmic portion of the chain corresponds to 595–615 (YEWRSPYGLTPRGRNRGTVFS). Positions 616–627 (YSSALNLCYAIL) form an intramembrane region, discontinuously helical. The Cytoplasmic portion of the chain corresponds to 628-641 (FGRTVSSKTPKCPT). The chain crosses the membrane as a helical span at residues 642–661 (GRFLMNLWAIFCLLVLSSYT). The Extracellular portion of the chain corresponds to 662–832 (ANLAAVMVGD…TLQMGVYHLS (171 aa)). Residue serine 701 coordinates glycine. D-serine contacts are provided by serine 701, alanine 702, and aspartate 745. Aspartate 745 contacts glycine. An N-linked (GlcNAc...) asparagine glycan is attached at asparagine 786. The chain crosses the membrane as a helical span at residues 833-848 (GLFVLLCLGLGSALLT). Residues 849–1003 (SLGEHVFYRL…RLLHAAPAES (155 aa)) are Cytoplasmic-facing. Residues 883–912 (LNTGPPEGQQERAEQECSGPKEEQPAADGA) form a disordered region. The span at 891-906 (QQERAEQECSGPKEEQ) shows a compositional bias: basic and acidic residues. Residues 947 to 986 (SNGPGVQAELRELELRIEAARERLRSALLRRGELRAQLGD) adopt a coiled-coil conformation. Residues 952–985 (VQAELRELELRIEAARERLRSALLRRGELRAQLG) form an involved in the trafficking and surface expression of NMDARs region.

The protein belongs to the glutamate-gated ion channel (TC 1.A.10.1) family. NR3B/GRIN3B subfamily. Forms heterotetrameric channels that contain at least two GluN1 subunits and at least a combination of one GluN2 and one GluN3 subunits (in vitro). Forms heterotetrameric channels composed of two GluN1/zeta subunits (GRIN1), and two identical GluN3 subunits (GRIN3A or GRIN3B) (in vitro). Does not form functional homomeric channels. In terms of tissue distribution, expressed in the facial nucleus and the ambiguus nucleus of the brainstem, pons, medulla, spinal cord and cerebellum.

The protein localises to the cell membrane. It localises to the postsynaptic cell membrane. The catalysed reaction is Ca(2+)(in) = Ca(2+)(out). It catalyses the reaction Na(+)(in) = Na(+)(out). Functionally, component of a non-conventional N-methyl-D-aspartate (NMDA) receptors (NMDARs) that function as heterotetrameric, ligand-gated cation channels with low calcium permeability and low voltage-dependent block by Mg(2+). Forms glutamatergic receptor complexes with GluN1 and GluN2 subunits which are activated by glycine binding to the GluN1 and GluN3 subunits and L-glutamate binding to GluN2 subunits. Forms excitatory glycinergic receptor complexes with GluN1 alone which are activated by glycine binding to the GluN1 and GluN3 subunits. GluN3B subunit also binds D-serine and, in the absence of glycine, activates glycinergic receptor complexes, but with lower efficacy than glycine. Each GluN3 subunit confers differential attributes to channel properties, including activation, deactivation and desensitization kinetics, pH sensitivity, Ca2(+) permeability, and binding to allosteric modulators. The sequence is that of Glutamate receptor ionotropic, NMDA 3B from Mus musculus (Mouse).